The primary structure comprises 257 residues: Thiazole synthase (257 aa).

The Schiff-base intermediate with DXP role is filled by K97. Residues G158, A184–G185, and N206–T207 contribute to the 1-deoxy-D-xylulose 5-phosphate site.

This sequence belongs to the ThiG family. Homotetramer. Forms heterodimers with either ThiH or ThiS.

It is found in the cytoplasm. It catalyses the reaction [ThiS sulfur-carrier protein]-C-terminal-Gly-aminoethanethioate + 2-iminoacetate + 1-deoxy-D-xylulose 5-phosphate = [ThiS sulfur-carrier protein]-C-terminal Gly-Gly + 2-[(2R,5Z)-2-carboxy-4-methylthiazol-5(2H)-ylidene]ethyl phosphate + 2 H2O + H(+). It participates in cofactor biosynthesis; thiamine diphosphate biosynthesis. In terms of biological role, catalyzes the rearrangement of 1-deoxy-D-xylulose 5-phosphate (DXP) to produce the thiazole phosphate moiety of thiamine. Sulfur is provided by the thiocarboxylate moiety of the carrier protein ThiS. In vitro, sulfur can be provided by H(2)S. The sequence is that of Thiazole synthase from Desulforamulus reducens (strain ATCC BAA-1160 / DSM 100696 / MI-1) (Desulfotomaculum reducens).